The following is a 254-amino-acid chain: NAD-dependent protein deacetylase 1 (254 aa).

The region spanning 5–254 (ASDLRSGVER…GETLGPFVGN (250 aa)) is the Deacetylase sirtuin-type domain. NAD(+)-binding residues include Ala31, Thr35, Phe42, Arg43, Gln108, Ile110, Asp111, and His128. Phe42 contributes to the nicotinamide binding site. Nicotinamide contacts are provided by Ile110 and Asp111. His128 functions as the Proton acceptor in the catalytic mechanism. The Zn(2+) site is built by Cys136, Cys139, Cys160, and Cys163. Positions 201, 202, 226, 243, and 244 each coordinate NAD(+).

Belongs to the sirtuin family. Class U subfamily. Zn(2+) serves as cofactor.

Its subcellular location is the cytoplasm. The catalysed reaction is N(6)-acetyl-L-lysyl-[protein] + NAD(+) + H2O = 2''-O-acetyl-ADP-D-ribose + nicotinamide + L-lysyl-[protein]. NAD-dependent protein deacetylase which modulates the activities of several enzymes which are inactive in their acetylated form. In Bradyrhizobium diazoefficiens (strain JCM 10833 / BCRC 13528 / IAM 13628 / NBRC 14792 / USDA 110), this protein is NAD-dependent protein deacetylase 1.